The following is a 106-amino-acid chain: Large ribosomal subunit protein uL24 (106 aa).

The protein belongs to the universal ribosomal protein uL24 family. Part of the 50S ribosomal subunit.

Its function is as follows. One of two assembly initiator proteins, it binds directly to the 5'-end of the 23S rRNA, where it nucleates assembly of the 50S subunit. Functionally, one of the proteins that surrounds the polypeptide exit tunnel on the outside of the subunit. The polypeptide is Large ribosomal subunit protein uL24 (Desulforudis audaxviator (strain MP104C)).